Consider the following 607-residue polypeptide: Acyl-coenzyme A thioesterase 11 (607 aa).

The transit peptide at 1 to 13 (MIQNVGNHLRRGL) directs the protein to the mitochondrion. Phosphoserine is present on residues S15 and S25. The 113-residue stretch at 43 to 155 (NPTEVQMSQL…LATFVARREI (113 aa)) folds into the HotDog ACOT-type 1 domain. Residues 91-93 (TAS), 120-122 (NSS), R181, and 271-273 (HFR) contribute to the CoA site. Positions 216–329 (EKTRVESVEL…FMTFVVLDAD (114 aa)) constitute a HotDog ACOT-type 2 domain. Residues 375 to 585 (LSVPWDPSNQ…GWNGKLAGGH (211 aa)) form the START domain.

In terms of tissue distribution, isoform 1 is predominantly expressed in skeletal muscle, liver, testis, stomach, spleen, lung and brain. Isoform 2 is predominantly expressed in kidney, uterus, hibernoma and white adipose tissue.

It localises to the mitochondrion matrix. The protein resides in the cytoplasm. The catalysed reaction is hexadecanoyl-CoA + H2O = hexadecanoate + CoA + H(+). It carries out the reaction tetradecanoyl-CoA + H2O = tetradecanoate + CoA + H(+). The enzyme catalyses dodecanoyl-CoA + H2O = dodecanoate + CoA + H(+). It catalyses the reaction butanoyl-CoA + H2O = butanoate + CoA + H(+). It participates in lipid metabolism; fatty acid metabolism. In terms of biological role, has an acyl-CoA thioesterase activity with a preference for the long chain fatty acyl-CoA thioesters hexadecanoyl-CoA/palmitoyl-CoA and tetradecanoyl-CoA/myristoyl-CoA which are the main substrates in the mitochondrial beta-oxidation pathway. This Homo sapiens (Human) protein is Acyl-coenzyme A thioesterase 11 (ACOT11).